We begin with the raw amino-acid sequence, 310 residues long: L-lactate dehydrogenase (310 aa).

NAD(+) is bound by residues Val-11, Asp-32, Tyr-62, and 76-77 (GV). Residues Gln-79, Arg-85, and 117-120 (NPVD) each bind substrate. NAD(+) contacts are provided by residues 115-117 (ASN) and Ser-140. 145–148 (DTAR) is a binding site for substrate. Residues Arg-150 and His-165 each coordinate beta-D-fructose 1,6-bisphosphate. His-172 functions as the Proton acceptor in the catalytic mechanism. Residue Thr-227 participates in substrate binding.

This sequence belongs to the LDH/MDH superfamily. LDH family. As to quaternary structure, homotetramer.

Its subcellular location is the cytoplasm. The catalysed reaction is (S)-lactate + NAD(+) = pyruvate + NADH + H(+). Its pathway is fermentation; pyruvate fermentation to lactate; (S)-lactate from pyruvate: step 1/1. Allosterically activated by fructose 1,6-bisphosphate (FBP). Its function is as follows. Catalyzes the conversion of lactate to pyruvate. This Allorhizobium ampelinum (strain ATCC BAA-846 / DSM 112012 / S4) (Agrobacterium vitis (strain S4)) protein is L-lactate dehydrogenase.